A 963-amino-acid polypeptide reads, in one-letter code: MLTTLIPLSQLNLPPNLQNSEQIQPLVTAEFASNFVHQTLQKQPDLLAEWLAKFPTPDDCCNYTERLAKILARVPNEEMLGRVLRQFRHRELARLSFIQSNKLATVELVFQHLSDLAESLILAARDWLFQRCCAEYGTPKNTLGETQELLILGMGKLGGRELNFSSDIDLIFTYPDIGETEGGRKSIENSKFFTRMAQRLIKVLDEITADGFVYRTDMRLRPFGDSGRLVLSFTAMEDYYQEQGRDWERYAMIKAKILGEDSQNLNHRYLKQMLRPFVYRRYLDFSAIQSLREMKEKISREVVRRNLTDNIKFGAGGIREVEFIAQTFQMIRGGRDKILQERSLLKVLPRLAELNLLTQTQVETLHNAYIFYRQIENVLQAIDDKQTQTLPTDEASQARLVFACQSYYQQDLYSEKTHWVEHSFNDWQQFMAVLSQYQQAVRQIFNEIIGEEETQANCNPVNEKLAEWKDILHYNIRLEDLSAVLKGYPKVAENDYTEIFRHFSTTFQDWVKRPIGVRGREVLRNLMPRIADSIFKGEDHLLLLPRVLNIVDKITTRTTYLELMLEKEQILPQLLALCSKSVMIAEQIARYPMLLDELMSHRGLTDVQAFEKYQSALQDYLIRIPEEDEEALIDGLRQFKQTQILRIAAADILGVLLVMKISDHLTYLAEAIINAVVNMAWKQVSQRFGVPEHLEADEKGFAVIGYGKLGGIELGYNSDLDLVFLHNAPEDSQTVGGKKEISSHQFYLKLAQKINSIFNLNTSAGVLYEVDMRLRPSGEAGLLVSTFNAYEHYQKNEAWTWESQALVRTRCVFGAENLKQAFEKIRQSTLAQPRASGQLRQEICEMRQKMYQHLSSHSAEQFHIKQDQGGITDIEFIAQYLVLAHSHQHPKMAVWSDNVRIFDSAVECGILSSEQSEQLQHCYTALRNKIHHLKLLRKDSVVDASEFTTERAFVREMWQRLLA.

An adenylyl removase region spans residues 1–453 (MLTTLIPLSQ…IFNEIIGEEE (453 aa)). An adenylyl transferase region spans residues 461 to 963 (VNEKLAEWKD…VREMWQRLLA (503 aa)).

It belongs to the GlnE family. Requires Mg(2+) as cofactor.

The catalysed reaction is [glutamine synthetase]-O(4)-(5'-adenylyl)-L-tyrosine + phosphate = [glutamine synthetase]-L-tyrosine + ADP. It carries out the reaction [glutamine synthetase]-L-tyrosine + ATP = [glutamine synthetase]-O(4)-(5'-adenylyl)-L-tyrosine + diphosphate. Involved in the regulation of glutamine synthetase GlnA, a key enzyme in the process to assimilate ammonia. When cellular nitrogen levels are high, the C-terminal adenylyl transferase (AT) inactivates GlnA by covalent transfer of an adenylyl group from ATP to specific tyrosine residue of GlnA, thus reducing its activity. Conversely, when nitrogen levels are low, the N-terminal adenylyl removase (AR) activates GlnA by removing the adenylyl group by phosphorolysis, increasing its activity. The regulatory region of GlnE binds the signal transduction protein PII (GlnB) which indicates the nitrogen status of the cell. The chain is Bifunctional glutamine synthetase adenylyltransferase/adenylyl-removing enzyme from Mannheimia haemolytica (Pasteurella haemolytica).